The following is a 162-amino-acid chain: Lipoprotein signal peptidase (162 aa).

3 helical membrane-spanning segments follow: residues 12–32 (WLWLVVVVLIIDLGSKYLILQ), 70–90 (WFFAGIAIGICVILMVMMYRS), and 102–122 (ALIIGGALGNLFDRLWHGFVV). Catalysis depends on residues D123 and D141. The chain crosses the membrane as a helical span at residues 137–157 (FNLADSAICIGAALIVLEGFL).

It belongs to the peptidase A8 family.

It is found in the cell inner membrane. It catalyses the reaction Release of signal peptides from bacterial membrane prolipoproteins. Hydrolyzes -Xaa-Yaa-Zaa-|-(S,diacylglyceryl)Cys-, in which Xaa is hydrophobic (preferably Leu), and Yaa (Ala or Ser) and Zaa (Gly or Ala) have small, neutral side chains.. Its pathway is protein modification; lipoprotein biosynthesis (signal peptide cleavage). In terms of biological role, this protein specifically catalyzes the removal of signal peptides from prolipoproteins. The chain is Lipoprotein signal peptidase from Citrobacter koseri (strain ATCC BAA-895 / CDC 4225-83 / SGSC4696).